Consider the following 285-residue polypeptide: Bifunctional protein FolD (285 aa).

Residues 166–168 (GAS) and isoleucine 232 each bind NADP(+).

It belongs to the tetrahydrofolate dehydrogenase/cyclohydrolase family. Homodimer.

It carries out the reaction (6R)-5,10-methylene-5,6,7,8-tetrahydrofolate + NADP(+) = (6R)-5,10-methenyltetrahydrofolate + NADPH. The enzyme catalyses (6R)-5,10-methenyltetrahydrofolate + H2O = (6R)-10-formyltetrahydrofolate + H(+). It participates in one-carbon metabolism; tetrahydrofolate interconversion. Its function is as follows. Catalyzes the oxidation of 5,10-methylenetetrahydrofolate to 5,10-methenyltetrahydrofolate and then the hydrolysis of 5,10-methenyltetrahydrofolate to 10-formyltetrahydrofolate. The protein is Bifunctional protein FolD of Pseudoalteromonas atlantica (strain T6c / ATCC BAA-1087).